Consider the following 1079-residue polypeptide: Integrator complex subunit 3 homolog (1079 aa).

Disordered regions lie at residues 544–574 (ETEAVFSDEDGENLGRCTKNEENTDDDDDLP), 925–949 (YPSSSPNKRKRPSKGSSAASSTPSA), and 1010–1079 (AVGR…NDSD). Low complexity predominate over residues 938–949 (KGSSAASSTPSA). Phosphoserine is present on residues serine 1049, serine 1050, serine 1054, and serine 1055. Residues 1062-1073 (HKITQAAKKRKK) are compositionally biased toward basic residues.

It belongs to the Integrator subunit 3 family. Belongs to the multiprotein complex Integrator, at least composed of IntS1, IntS2, IntS3, IntS4, omd/IntS5, IntS6, defl/IntS7, IntS8, IntS9, IntS10, IntS11, IntS12, asun/IntS13, IntS14 and IntS15. The core complex associates with protein phosphatase 2A subunits mts/PP2A and Pp2A-29B, to form the Integrator-PP2A (INTAC) complex.

Its subcellular location is the nucleus. It localises to the cytoplasm. Functionally, component of the integrator complex, a multiprotein complex that terminates RNA polymerase II (Pol II) transcription in the promoter-proximal region of genes. The integrator complex provides a quality checkpoint during transcription elongation by driving premature transcription termination of transcripts that are unfavorably configured for transcriptional elongation: the complex terminates transcription by (1) catalyzing dephosphorylation of the C-terminal domain (CTD) of Pol II subunit Polr2A/Rbp1 and Spt5, and (2) degrading the exiting nascent RNA transcript via endonuclease activity. The integrator complex is also involved in the 3'-end processing of the U7 snRNA, and also the spliceosomal snRNAs U1, U2, U4 and U5. The protein is Integrator complex subunit 3 homolog (IntS3) of Drosophila mojavensis (Fruit fly).